We begin with the raw amino-acid sequence, 378 residues long: Squalene methyltransferase 2 (378 aa).

Residues 17-37 (LLTVKGATGLIAALILGYIII) form a helical membrane-spanning segment.

Belongs to the class I-like SAM-binding methyltransferase superfamily. Erg6/SMT family.

Its subcellular location is the microsome membrane. It carries out the reaction squalene + 2 S-adenosyl-L-methionine = 3,22-dimethyl-1,2,23,24-tetradehydro-2,3,22,23-tetrahydrosqualene + 2 S-adenosyl-L-homocysteine + 2 H(+). In terms of biological role, converts squalene to mono- and dimethyl derivatives, but not to tri- and tetramethylated products. Unable to methylate cycloartenol, zymosterol or lanosterol. Methylates both C-3 and C22 positions, but only C-3 position in monomethylated products. Produces mainly monomethylated squalene and only 20% of dimethylated squalene. In Botryococcus braunii (Green alga), this protein is Squalene methyltransferase 2 (TMT-2).